The sequence spans 656 residues: Methylenetetrahydrofolate reductase (NADPH) (656 aa).

Residues 1–46 are disordered; the sequence is MVNEARGNDSLNPCLEGSASSSSESSKDSSRCSTPGLDPERHERLR. 9 positions are modified to phosphoserine: serine 10, serine 18, serine 20, serine 21, serine 23, serine 25, serine 26, serine 29, and serine 30. A Phosphothreonine modification is found at threonine 34. Catalysis depends on glutamate 63, which acts as the Proton donor/acceptor. NAD(+) contacts are provided by residues 63–68 and 94–95; these read EFFPPR and TW. Phosphothreonine is present on threonine 94. 94–95 contacts FAD; the sequence is TW. Phosphoserine is present on serine 103. FAD-binding positions include histidine 127, 157 to 159, 174 to 175, tyrosine 197, 201 to 204, aspartate 210, and lysine 217; these read RGD, YA, and HPEA. Aspartate 159 serves as a coordination point for substrate. Substrate contacts are provided by glutamine 228, tyrosine 321, and arginine 325. Serine 394 is subject to Phosphoserine. Threonine 451 bears the Phosphothreonine mark. S-adenosyl-L-methionine-binding positions include asparagine 456, 461 to 464, 481 to 485, threonine 560, and threonine 573; these read AAET and TINSQ.

This sequence belongs to the methylenetetrahydrofolate reductase family. As to quaternary structure, homodimer. FAD is required as a cofactor. In terms of processing, phosphorylation of an N-terminal serine-rich phosphorylation region increases sensitivity to S-adenosylmethionine and inhibition.

It catalyses the reaction (6S)-5-methyl-5,6,7,8-tetrahydrofolate + NADP(+) = (6R)-5,10-methylene-5,6,7,8-tetrahydrofolate + NADPH + H(+). It participates in one-carbon metabolism; tetrahydrofolate interconversion. Allosterically regulated by S-adenosylmethionine (SAM). Functionally, catalyzes the conversion of 5,10-methylenetetrahydrofolate to 5-methyltetrahydrofolate, a cosubstrate for homocysteine remethylation to methionine. Represents a key regulatory connection between the folate and methionine cycles. This Macaca fascicularis (Crab-eating macaque) protein is Methylenetetrahydrofolate reductase (NADPH) (MTHFR).